We begin with the raw amino-acid sequence, 322 residues long: Ferredoxin--NADP reductase (322 aa).

Residues aspartate 34, glutamine 42, tyrosine 47, valine 87, phenylalanine 120, aspartate 279, and threonine 320 each coordinate FAD.

The protein belongs to the ferredoxin--NADP reductase type 2 family. Homodimer. FAD serves as cofactor.

It carries out the reaction 2 reduced [2Fe-2S]-[ferredoxin] + NADP(+) + H(+) = 2 oxidized [2Fe-2S]-[ferredoxin] + NADPH. The chain is Ferredoxin--NADP reductase from Streptococcus pneumoniae serotype 19F (strain G54).